The primary structure comprises 523 residues: Putative pentatricopeptide repeat-containing protein At3g15200 (523 aa).

PPR repeat units lie at residues 142-172 (SSMLYNEILDVLGKMRRFEEFHQVFDEMSKR), 177-211 (NEKTYEVLLNRYAAAHKVDEAVGVFERRKEFGIDD), 212-242 (DLVAFHGLLMWLCRYKHVEFAETLFCSRRRE), 246-280 (DIKAMNMILNGWCVLGNVHEAKRFWKDIIASKCRP), 281-315 (DVVSYGTMINALTKKGKLGKAMELYRAMWDTRRNP), 316-350 (DVKICNNVIDALCFKKRIPEALEVFREISEKGPDP), 351-385 (NVVTYNSLLKHLCKIRRTEKVWELVEEMELKGGSC), 388-418 (NDVTFSYLLKYSQRSKDVDIVLERMAKNKCE), 420-454 (TSDLYNLMFRLYVQWDKEEKVREIWSEMERSGLGP), and 455-489 (DQRTYTIRIHGLHTKGKIGEALSYFQEMMSKGMVP). The interval 497–523 (LNQNKTKPRVEDKMLRSNLTSEESESD) is disordered.

It belongs to the PPR family. P subfamily.

The polypeptide is Putative pentatricopeptide repeat-containing protein At3g15200 (Arabidopsis thaliana (Mouse-ear cress)).